An 844-amino-acid chain; its full sequence is Translation initiation factor IF-2 (844 aa).

Residues 1 to 11 (MTEDVKADVPK) are compositionally biased toward basic and acidic residues. 2 disordered regions span residues 1–35 (MTEDVKADVPKKLSIQRRTKTTVSGTTTSGKSKAV) and 79–248 (RLEA…KGAA). Residues 21–33 (TTVSGTTTSGKSK) are compositionally biased toward low complexity. Positions 79 to 161 (RLEAEKAATK…AAEEAKRYAE (83 aa)) are enriched in basic and acidic residues. The segment covering 162 to 175 (ADDSDNESSSEDYS) has biased composition (acidic residues). The segment covering 200–210 (RGKNKVAKAKK) has biased composition (basic residues). Basic and acidic residues predominate over residues 211–237 (GGRDDENSKNSKNERESNRKNQKDAKF). Residues 343-513 (TRAPVVTIMG…LLQSEVLELT (171 aa)) form the tr-type G domain. The segment at 352–359 (GHVDHGKT) is G1. Residue 352–359 (GHVDHGKT) participates in GTP binding. Residues 377–381 (GITQH) are G2. The G3 stretch occupies residues 399–402 (DTPG). Residues 399–403 (DTPGH) and 453–456 (NKID) each bind GTP. A G4 region spans residues 453–456 (NKID). The tract at residues 489 to 491 (SAK) is G5.

It belongs to the TRAFAC class translation factor GTPase superfamily. Classic translation factor GTPase family. IF-2 subfamily.

It is found in the cytoplasm. In terms of biological role, one of the essential components for the initiation of protein synthesis. Protects formylmethionyl-tRNA from spontaneous hydrolysis and promotes its binding to the 30S ribosomal subunits. Also involved in the hydrolysis of GTP during the formation of the 70S ribosomal complex. In Haemophilus influenzae (strain PittGG), this protein is Translation initiation factor IF-2.